Reading from the N-terminus, the 145-residue chain is MNLVQLGKLHENVLDAGCEPNRNARYLASLGYKVVGIDISERAISKAIDKTSSEKSNVNFNQRDFSRLNEFKGHFDTVIDIGCFHSILNSDHEPHTASLSHICHSDSSVFLRAFSETNKSRYRRWQGHKRYSLALKRNNVKKLSL.

Belongs to the methyltransferase superfamily.

In terms of biological role, probable methyltransferase. This is an uncharacterized protein from Schizosaccharomyces pombe (strain 972 / ATCC 24843) (Fission yeast).